We begin with the raw amino-acid sequence, 143 residues long: Spliceosomal protein DIB1 (143 aa).

This sequence belongs to the DIM1 family. In terms of assembly, component of the 25S [U4/U6.U5] tri-snRNP.

The protein localises to the nucleus. Essential role in pre-mRNA splicing. Also essential for entry into mitosis (G2/M progression) as well as for chromosome segregation during mitosis. In Eremothecium gossypii (strain ATCC 10895 / CBS 109.51 / FGSC 9923 / NRRL Y-1056) (Yeast), this protein is Spliceosomal protein DIB1 (DIB1).